A 258-amino-acid chain; its full sequence is MVLIRVLANLLILQLSYAQKSSELVVGGDECNINEHRSLVAIFNSTEFFCSGTLINQEWVVTAAHCDSTNFKMKLGVHSKKVPNEDEQTRNPKEKFFCPNKKKDDVLDKDIMLIKLDSPVSNSEHIAPLSLPSSPPSVGSVCHIMGWGSITPIEKTLPDVPYCANINLLDDAVCRPPYPELPATSRTLCAGILEGGKDTCVVDSGGPLICNGQFQGIVFYGAHPCGQALKPGVYTKVFDYNDWIQSIIAGNTAATCPP.

The first 18 residues, M1–A18, serve as a signal peptide directing secretion. Residues Q19–L24 constitute a propeptide that is removed on maturation. One can recognise a Peptidase S1 domain in the interval V25–A249. Intrachain disulfides connect C31-C163, C50-C66, C98-C256, C142-C210, C174-C189, and C200-C225. The N-linked (GlcNAc...) asparagine glycan is linked to N44. Catalysis depends on charge relay system residues H65 and D110. The active-site Charge relay system is the S204.

The protein belongs to the peptidase S1 family. Snake venom subfamily. Monomer. In terms of tissue distribution, expressed by the venom gland.

It localises to the secreted. Its function is as follows. Snake venom serine protease that may act in the hemostasis system of the prey. This chain is Snake venom serine proteinase 5, found in Crotalus adamanteus (Eastern diamondback rattlesnake).